The chain runs to 350 residues: Probable dual-specificity RNA methyltransferase RlmN (350 aa).

Glutamate 98 (proton acceptor) is an active-site residue. The Radical SAM core domain maps to 104-334; the sequence is HTYGNSVCVS…VTVRRELGGD (231 aa). Cysteines 111 and 339 form a disulfide. Cysteine 118, cysteine 122, and cysteine 125 together coordinate [4Fe-4S] cluster. Residues 165-166, serine 197, 220-222, and asparagine 296 each bind S-adenosyl-L-methionine; these read GE and SLH. The S-methylcysteine intermediate role is filled by cysteine 339.

The protein belongs to the radical SAM superfamily. RlmN family. It depends on [4Fe-4S] cluster as a cofactor.

The protein localises to the cytoplasm. It carries out the reaction adenosine(2503) in 23S rRNA + 2 reduced [2Fe-2S]-[ferredoxin] + 2 S-adenosyl-L-methionine = 2-methyladenosine(2503) in 23S rRNA + 5'-deoxyadenosine + L-methionine + 2 oxidized [2Fe-2S]-[ferredoxin] + S-adenosyl-L-homocysteine. The enzyme catalyses adenosine(37) in tRNA + 2 reduced [2Fe-2S]-[ferredoxin] + 2 S-adenosyl-L-methionine = 2-methyladenosine(37) in tRNA + 5'-deoxyadenosine + L-methionine + 2 oxidized [2Fe-2S]-[ferredoxin] + S-adenosyl-L-homocysteine. Functionally, specifically methylates position 2 of adenine 2503 in 23S rRNA and position 2 of adenine 37 in tRNAs. The polypeptide is Probable dual-specificity RNA methyltransferase RlmN (Desulforamulus reducens (strain ATCC BAA-1160 / DSM 100696 / MI-1) (Desulfotomaculum reducens)).